The chain runs to 617 residues: UvrABC system protein C (617 aa).

The GIY-YIG domain maps to 11–85 (TTPGVYIFRK…IKQHRPHYNV (75 aa)). One can recognise a UVR domain in the interval 194–229 (APVIARLKEDMKVAAQGQDFEQAARLRDRVQAVEKL).

The protein belongs to the UvrC family. Interacts with UvrB in an incision complex.

It is found in the cytoplasm. Its function is as follows. The UvrABC repair system catalyzes the recognition and processing of DNA lesions. UvrC both incises the 5' and 3' sides of the lesion. The N-terminal half is responsible for the 3' incision and the C-terminal half is responsible for the 5' incision. This is UvrABC system protein C from Deinococcus radiodurans (strain ATCC 13939 / DSM 20539 / JCM 16871 / CCUG 27074 / LMG 4051 / NBRC 15346 / NCIMB 9279 / VKM B-1422 / R1).